A 554-amino-acid polypeptide reads, in one-letter code: Bifunctional epoxide hydrolase 2 (554 aa).

Positions 1–224 (MALRVAAFDL…KVTGTQFPEA (224 aa)) are phosphatase. 2 residues coordinate Mg(2+): aspartate 9 and aspartate 11. Position 55 is an N6-succinyllysine (lysine 55). Residue 123 to 124 (TN) participates in phosphate binding. Lysine 176 carries the post-translational modification N6-acetyllysine; alternate. Lysine 176 carries the N6-succinyllysine; alternate modification. Aspartate 185 is a Mg(2+) binding site. Lysine 191 and lysine 215 each carry N6-acetyllysine. The segment at 233–554 (NDVSHGYVTV…VQNPSVTSKI (322 aa)) is epoxide hydrolase. Residues 257–530 (PALCLCHGFP…CGHWTQIEKP (274 aa)) form the AB hydrolase-1 domain. Catalysis depends on aspartate 333, which acts as the Nucleophile. The residue at position 368 (serine 368) is a Phosphoserine. Lysine 371 bears the N6-succinyllysine mark. Tyrosine 381 is a binding site for substrate. N6-succinyllysine is present on residues lysine 420 and lysine 454. The active-site Proton donor is the tyrosine 465. Lysine 504 is subject to N6-succinyllysine. Lysine 508 is modified (N6-acetyllysine; alternate). Lysine 508 carries the N6-succinyllysine; alternate modification. Cysteine 521 carries S-(15-deoxy-Delta12,14-prostaglandin J2-9-yl)cysteine lipidation. Residue histidine 523 is the Proton acceptor of the active site. The Microbody targeting signal motif lies at 552-554 (SKI). Lysine 553 bears the N6-succinyllysine mark.

The protein belongs to the AB hydrolase superfamily. Epoxide hydrolase family. Homodimer. Mg(2+) is required as a cofactor. In terms of processing, the N-terminus is blocked. Post-translationally, the covalent modification of cysteine by 15-deoxy-Delta12,14-prostaglandin-J2 is autocatalytic and reversible. It may occur as an alternative to other cysteine modifications, such as S-nitrosylation and S-palmitoylation. Detected in liver, intestine, ovary and kidney. Detected at low levels in heart and muscle.

It localises to the cytoplasm. Its subcellular location is the peroxisome. It carries out the reaction an epoxide + H2O = an ethanediol. The catalysed reaction is (9S,10S)-10-hydroxy-9-(phosphooxy)octadecanoate + H2O = (9S,10S)-9,10-dihydroxyoctadecanoate + phosphate. The enzyme catalyses 8-hydroxy-(11S,12S)-epoxy-(5Z,9E,14Z)-eicosatrienoate + H2O = (8,11R,12S)-trihydroxy-(5Z,9E,14Z)-eicosatrienoate. It catalyses the reaction 10-hydroxy-(11S,12S)-epoxy- (5Z,8Z,14Z)-eicosatrienoate + H2O = (10,11S,12R)-trihydroxy-(5Z,8Z,14Z)-eicosatrienoate. It carries out the reaction (8S,9R)-epoxy-(5Z,11Z,14Z)-eicosatrienoate + H2O = (8S,9S)-dihydroxy-(5Z,11Z,14Z)-eicosatrienoate. The catalysed reaction is (11S,12R)-epoxy-(5Z,8Z,14Z)-eicosatrienoate + H2O = (11R,12R)-dihydroxy-(5Z,8Z,14Z)-eicosatrienoate. The enzyme catalyses (11S,12R)-epoxy-(5Z,8Z,14Z)-eicosatrienoate + H2O = (11S,12S)-dihydroxy-(5Z,8Z,14Z)-eicosatrienoate. It catalyses the reaction (14S,15R)-epoxy-(5Z,8Z,11Z)-eicosatrienoate + H2O = (14R,15R)-dihydroxy-(5Z,8Z,11Z)-eicosatrienoate. It carries out the reaction (14S,15R)-epoxy-(5Z,8Z,11Z)-eicosatrienoate + H2O = (14S,15S)-dihydroxy-(5Z,8Z,11Z)-eicosatrienoate. The catalysed reaction is (11R,12S)-epoxy-(5Z,8Z,14Z)-eicosatrienoate + H2O = (11S,12S)-dihydroxy-(5Z,8Z,14Z)-eicosatrienoate. The enzyme catalyses (11R,12S)-epoxy-(5Z,8Z,14Z)-eicosatrienoate + H2O = (11R,12R)-dihydroxy-(5Z,8Z,14Z)-eicosatrienoate. It catalyses the reaction (8S,9R)-epoxy-(5Z,11Z,14Z)-eicosatrienoate + H2O = (8R,9R)-dihydroxy-(5Z,11Z,14Z)-eicosatrienoate. It carries out the reaction 12-phosphooxy-(9Z)-octadecenoate + H2O = 12-hydroxy-(9Z)-octadecenoate + phosphate. The catalysed reaction is 12-phosphooxy-(9E)-octadecenoate + H2O = 12-hydroxy-(9E)-octadecenoate + phosphate. The enzyme catalyses 12-(phosphooxy)octadecanoate + H2O = 12-hydroxyoctadecanoate + phosphate. It catalyses the reaction 8,9-epoxy-(5Z,11Z,14Z)-eicosatrienoate + H2O = 8,9-dihydroxy-(5Z,11Z,14Z)-eicosatrienoate. It carries out the reaction 11,12-epoxy-(5Z,8Z,14Z)-eicosatrienoate + H2O = 11,12-dihydroxy-(5Z,8Z,14Z)-eicosatrienoate. The catalysed reaction is 14,15-epoxy-(5Z,8Z,11Z)-eicosatrienoate + H2O = 14,15-dihydroxy-(5Z,8Z,11Z)-eicosatrienoate. The enzyme catalyses 9,10-epoxy-(12Z)-octadecenoate + H2O = 9,10-dihydroxy-(12Z)-octadecenoate. It catalyses the reaction 1-tetradecanoyl-sn-glycerol 3-phosphate + H2O = 1-tetradecanoyl-sn-glycerol + phosphate. It carries out the reaction 1-octadecanoyl-sn-glycero-3-phosphate + H2O = 1-octadecanoyl-sn-glycerol + phosphate. The catalysed reaction is 1-(5Z,8Z,11Z,14Z-eicosatetraenoyl)-sn-glycero-3-phosphate + H2O = 1-(5Z,8Z,11Z,14Z-eicosatetraenoyl)-sn-glycerol + phosphate. The enzyme catalyses 1-hexadecanoyl-sn-glycero-3-phosphate + H2O = 1-hexadecanoyl-sn-glycerol + phosphate. It catalyses the reaction 1-(9Z-octadecenoyl)-sn-glycero-3-phosphate + H2O = 1-(9Z-octadecenoyl)-sn-glycerol + phosphate. It carries out the reaction (14R,15S)-epoxy-(5Z,8Z,11Z)-eicosatrienoate + H2O = (14R,15R)-dihydroxy-(5Z,8Z,11Z)-eicosatrienoate. Its activity is regulated as follows. Inhibited by 1-(1-acetylpiperidin-4-yl)-3-(4-(trifl uoromethoxy)phenyl)urea (TPAU), 1-cyclohexyl-3-dodecylurea (CDU), 12-(3-adamantan-1-yl-ureido)-dodecanoic acid (AUDA), 1-((3S, 5S, 7S)-adamantan-1-yl)-3-(5-(2-(2-ethoxyethoxy) ethoxy)pentyl)urea (AEPU), N-adamantyl-N[']-cyclohexyl urea (ACU), 4-(((1S, 4S)-4-(3-((3S, 5S, 7S)-adamantan-1-yl) ureido)cyclohexyl)oxy)benzoic acid (c-AUCB), 4-(((1R, 4R)-4-(3-((3S, 5S, 7S)-adamantan-1-yl)ureido)cyclohexyl)oxy)benzoic acid (t-AUCB), 4-(((1R, 4R)-4-(3-(4(trifluoromethoxy)phenyl)ureido)cyclohexyl)oxy)benzoic acid (t-TAUCB) and to a lesser extent by 8-(3-((3S, 5S, 7S)-adamantan-1-yl)ureido) octanoic acid (AUOA). Phosphatase activity is inhibited by dodecyl-phosphate, phospholipids such as phospho-lysophosphatidic acids and fatty acids such as palmitic acid and lauric acid. Bifunctional enzyme. The C-terminal domain has epoxide hydrolase activity and acts on epoxides (alkene oxides, oxiranes) and arene oxides. Plays a role in xenobiotic metabolism by degrading potentially toxic epoxides. Also determines steady-state levels of physiological mediators. Its function is as follows. Bifunctional enzyme. The N-terminal domain has lipid phosphatase activity, with the highest activity towards threo-9,10-phosphonooxy-hydroxy-octadecanoic acid, followed by erythro-9,10-phosphonooxy-hydroxy-octadecanoic acid, 12-phosphonooxy-octadec-9Z-enoic acid and 12-phosphonooxy-octadec-9E-enoic acid. Has phosphatase activity toward lyso-glycerophospholipids with also some lower activity toward lysolipids of sphingolipid and isoprenoid phosphates. This chain is Bifunctional epoxide hydrolase 2, found in Mus musculus (Mouse).